A 46-amino-acid polypeptide reads, in one-letter code: Defensin-like protein AX2 (46 aa).

4 disulfide bridges follow: Cys3-Cys46, Cys14-Cys34, Cys20-Cys40, and Cys24-Cys42.

In terms of tissue distribution, leaves and flowers.

Strong inhibiting activity against C.beticola and other filamentous fungi. Little or no effect against bacteria. The polypeptide is Defensin-like protein AX2 (Beta vulgaris (Sugar beet)).